We begin with the raw amino-acid sequence, 439 residues long: Damage-control phosphatase ARMT1 (439 aa).

N-acetylalanine is present on Ala2. Position 4 is a phosphoserine (Ser4). Position 40 is an N6-acetyllysine (Lys40). Mn(2+)-binding residues include Asp251 and Asn252. Position 251–252 (251–252 (DN)) interacts with substrate. S-adenosyl-L-methionine contacts are provided by Glu256 and Asp289. Residue Asp289 participates in Mn(2+) binding. Substrate is bound by residues 365–369 (DLNYR) and Lys402. Positions 399 to 402 (RTLK) match the Subfamily III RTxK motif motif.

It belongs to the damage-control phosphatase family. Sugar phosphate phosphatase III subfamily. Requires Mn(2+) as cofactor. The cofactor is Ni(2+). Automethylated.

The catalysed reaction is beta-D-fructose 1-phosphate + H2O = D-fructose + phosphate. It catalyses the reaction beta-D-fructose 6-phosphate = dihydroxyacetone + D-glyceraldehyde 3-phosphate. It carries out the reaction L-glutamyl-[protein] + S-adenosyl-L-methionine = [protein]-L-glutamate 5-O-methyl ester + S-adenosyl-L-homocysteine. Functionally, metal-dependent phosphatase that shows phosphatase activity against several substrates, including fructose-1-phosphate and fructose-6-phosphate. Its preference for fructose-1-phosphate, a strong glycating agent that causes DNA damage rather than a canonical yeast metabolite, suggests a damage-control function in hexose phosphate metabolism. Has also been shown to have O-methyltransferase activity that methylates glutamate residues of target proteins to form gamma-glutamyl methyl ester residues. Possibly methylates PCNA, suggesting it is involved in the DNA damage response. The chain is Damage-control phosphatase ARMT1 from Rattus norvegicus (Rat).